Here is a 784-residue protein sequence, read N- to C-terminus: LPS-assembly protein LptD (784 aa).

Residues 1 to 24 (MKKRIPTLLATMIASALYSHQGLA) form the signal peptide. 2 cysteine pairs are disulfide-bonded: Cys31/Cys724 and Cys173/Cys725.

Belongs to the LptD family. In terms of assembly, component of the lipopolysaccharide transport and assembly complex. Interacts with LptE and LptA. Contains two intramolecular disulfide bonds.

It localises to the cell outer membrane. Together with LptE, is involved in the assembly of lipopolysaccharide (LPS) at the surface of the outer membrane. This Salmonella typhi protein is LPS-assembly protein LptD.